Reading from the N-terminus, the 553-residue chain is Arginine--tRNA ligase (553 aa).

The short motif at 130 to 140 (ANPTGDLHIGH) is the 'HIGH' region element.

Belongs to the class-I aminoacyl-tRNA synthetase family. Monomer.

The protein resides in the cytoplasm. It catalyses the reaction tRNA(Arg) + L-arginine + ATP = L-arginyl-tRNA(Arg) + AMP + diphosphate. The polypeptide is Arginine--tRNA ligase (Staphylococcus aureus (strain MSSA476)).